The sequence spans 302 residues: MFFRNLTLFRFPTSLDFSQIDSILPNARLRPVGPLEMTSRGFISPFGREEQEVLNQRQGDFLWLTVGSEDKILPASVVNDLLTRKCSEIEEKKGHPPGGRERKRIKDDLIHELLPRAFVKNSRIDAMLDLRYGYVAVDTASRKAAETVISEIRDLLGSFPALPLNAEISIRSMLTSWIAGEPLPEHLNLGDECEMKDATEGGAIIKCQHQALRCEEIDKHLEVGKQVSKLALILDDHVSFVLGDDLVIRKLKFLDGMLDQLEHSDTDGIRAELDACFALMSAEIRRLFLLLEVPLKLSKANN.

It belongs to the RdgC family.

It localises to the cytoplasm. The protein resides in the nucleoid. Functionally, may be involved in recombination. This chain is Recombination-associated protein RdgC, found in Xylella fastidiosa (strain M12).